Consider the following 113-residue polypeptide: MGSSAFEVLTFFLKDYKANTPQKLKIIDAYLLYILLTGINQFLYCCLVGTFPFNSFLSGFISCVASFVLGVCLRLQVNPQNSSNFCGIPPERAFADFIFAHVVLHLVVMNFIG.

Topologically, residues 1–30 (MGSSAFEVLTFFLKDYKANTPQKLKIIDAY) are cytoplasmic. The chain crosses the membrane as a helical span at residues 31–51 (LLYILLTGINQFLYCCLVGTF). Position 52 (proline 52) is a topological domain, lumenal. A helical transmembrane segment spans residues 53-73 (FNSFLSGFISCVASFVLGVCL). The Cytoplasmic portion of the chain corresponds to 74 to 92 (RLQVNPQNSSNFCGIPPER). Residues 93–113 (AFADFIFAHVVLHLVVMNFIG) traverse the membrane as a helical segment.

It belongs to the DAD/OST2 family. As to quaternary structure, component of the oligosaccharyltransferase (OST) complex. As to expression, widely expressed. Greatest expression seen in the epidermis, intermediate expression in the fat body and midgut and mild expression observed in the silk gland.

The protein localises to the endoplasmic reticulum membrane. The protein operates within protein modification; protein glycosylation. Functionally, subunit of the oligosaccharyl transferase (OST) complex that catalyzes the initial transfer of a defined glycan (Glc(3)Man(9)GlcNAc(2) in eukaryotes) from the lipid carrier dolichol-pyrophosphate to an asparagine residue within an Asn-X-Ser/Thr consensus motif in nascent polypeptide chains, the first step in protein N-glycosylation. N-glycosylation occurs cotranslationally and the complex associates with the Sec61 complex at the channel-forming translocon complex that mediates protein translocation across the endoplasmic reticulum (ER). All subunits are required for a maximal enzyme activity. The chain is Dolichyl-diphosphooligosaccharide--protein glycosyltransferase subunit DAD1 from Araneus ventricosus (Orbweaver spider).